We begin with the raw amino-acid sequence, 405 residues long: MQRNGVMECSVCHSKVVAPSPRSVSRAYDKHRSKISSKYRALNFLLVSGDCILVGLQPILVFMSKVDGKFQFSPISVNFLTEVTKVIFAIVMLIIQSRKQKVGEKPLLSLSTFVQAARNNALLAVPALLYAINNYLKFIMQLYFSPATVKMLSNLKVLVIAILLKFIMRRKFSIIQWEALALLLIGISVNQLSSIPDGTKSFGLAVTTIAYIYTLIFVTVPSLASVYNEYALKSQFDTSIYLQNLFLYGYGAIFNFLGILGTVIFQGPESFDILQGHSRATMFLICNNAAQGILSSFFFKYADTILKKYSSTVATIFTGLASAAFLGHTLTVNFLLGISIVFISMHQFFSPLAKVKDDKPAGALEPEDAQNHRSSDSSFVNMTAGAADDASHLTSTDERKPLLPI.

Residues 1-43 are Cytoplasmic-facing; sequence MQRNGVMECSVCHSKVVAPSPRSVSRAYDKHRSKISSKYRALN. Residues 44 to 64 traverse the membrane as a helical segment; sequence FLLVSGDCILVGLQPILVFMS. At 65 to 74 the chain is on the lumenal side; the sequence is KVDGKFQFSP. A helical membrane pass occupies residues 75–95; sequence ISVNFLTEVTKVIFAIVMLII. The Cytoplasmic segment spans residues 96–121; the sequence is QSRKQKVGEKPLLSLSTFVQAARNNA. Residues 122-142 traverse the membrane as a helical segment; that stretch reads LLAVPALLYAINNYLKFIMQL. Residue tyrosine 143 is a topological domain, lumenal. Residues 144-164 traverse the membrane as a helical segment; the sequence is FSPATVKMLSNLKVLVIAILL. Residues 165 to 171 lie on the Cytoplasmic side of the membrane; that stretch reads KFIMRRK. A helical membrane pass occupies residues 172 to 192; the sequence is FSIIQWEALALLLIGISVNQL. Topologically, residues 193–203 are lumenal; that stretch reads SSIPDGTKSFG. The helical transmembrane segment at 204–224 threads the bilayer; the sequence is LAVTTIAYIYTLIFVTVPSLA. The Cytoplasmic segment spans residues 225–244; sequence SVYNEYALKSQFDTSIYLQN. Residues 245–265 form a helical membrane-spanning segment; that stretch reads LFLYGYGAIFNFLGILGTVIF. The Lumenal portion of the chain corresponds to 266–281; it reads QGPESFDILQGHSRAT. A helical membrane pass occupies residues 282–302; sequence MFLICNNAAQGILSSFFFKYA. Over 303–322 the chain is Cytoplasmic; sequence DTILKKYSSTVATIFTGLAS. A helical transmembrane segment spans residues 323–343; sequence AAFLGHTLTVNFLLGISIVFI. At 344 to 405 the chain is on the lumenal side; sequence SMHQFFSPLA…TDERKPLLPI (62 aa). Positions 386–405 are disordered; that stretch reads AADDASHLTSTDERKPLLPI. Residues 389–405 are compositionally biased toward basic and acidic residues; it reads DASHLTSTDERKPLLPI.

The protein belongs to the nucleotide-sugar transporter family. CMP-Sialate:CMP antiporter (TC 2.A.7.12) subfamily.

It localises to the golgi apparatus membrane. In terms of biological role, sugar transporter involved in the transport of CMP-sialic acid from the cytoplasm into the Golgi. May transport important nucleotide sugars such as CMP-Kdo (2-keto-3-deoxy-D-manno-octulosonic acid) in physiological conditions. The sequence is that of CMP-sialic acid transporter 4 from Oryza sativa subsp. indica (Rice).